The following is a 1203-amino-acid chain: Metabotropic glutamate receptor 5 (1203 aa).

A signal peptide spans 1-20 (MVLLLILSVLLLKEDVRGSA). The Extracellular segment spans residues 21–579 (QSSERRVVAH…QYLRWGDPEP (559 aa)). Cys57 and Cys99 are joined by a disulfide. Tyr64 lines the L-glutamate pocket. The N-linked (GlcNAc...) asparagine glycan is linked to Asn88. Residues Ser151 and 172–174 (SAT) contribute to the L-glutamate site. Asn209 carries N-linked (GlcNAc...) asparagine glycosylation. Residue Tyr222 participates in L-glutamate binding. 8 disulfides stabilise this stretch: Cys240–Cys529, Cys275–Cys277, Cys364–Cys380, Cys418–Cys425, Cys510–Cys530, Cys514–Cys533, Cys536–Cys548, and Cys551–Cys564. Asp304 serves as a coordination point for L-glutamate. Asn377 and Asn381 each carry an N-linked (GlcNAc...) asparagine glycan. Lys395 contacts L-glutamate. Asn444 is a glycosylation site (N-linked (GlcNAc...) asparagine). A helical transmembrane segment spans residues 580–602 (IAAVVFACLGLLATLFVTVIFII). Residues 603–612 (YRDTPVVKSS) lie on the Cytoplasmic side of the membrane. The helical transmembrane segment at 613-635 (SRELCYIILAGICLGYLCTFCLI) threads the bilayer. The Extracellular portion of the chain corresponds to 636 to 643 (AKPKQIYC). A disulfide bridge connects residues Cys643 and Cys732. The chain crosses the membrane as a helical span at residues 644-666 (YLQRIGIGLSPAMSYSALVTKTN). Residues 667-692 (RIARILAGSKKKICTKKPRFMSACAQ) are Cytoplasmic-facing. A helical transmembrane segment spans residues 693–713 (LVIAFILICIQLGIIVALFIM). The Extracellular portion of the chain corresponds to 714–736 (EPPDIMHDYPSIREVYLICNTTN). N-linked (GlcNAc...) asparagine glycosylation is present at Asn733. A helical transmembrane segment spans residues 737-758 (LGVVTPLGYNGLLILSCTFYAF). At 759-771 (KTRNVPANFNEAK) the chain is on the cytoplasmic side. Residues 772–794 (YIAFTMYTTCIIWLAFVPIYFGS) traverse the membrane as a helical segment. At 795 to 797 (NYK) the chain is on the extracellular side. Residues 798 to 819 (IITMCFSVSLSATVALGCMFVP) traverse the membrane as a helical segment. At 820–1203 (KVYIILAKPE…RDYTQSSSSL (384 aa)) the chain is on the cytoplasmic side. Ser860 carries the post-translational modification Phosphoserine. Arg868 bears the Omega-N-methylarginine mark. Disordered stretches follow at residues 892–970 (FTPK…GSGP), 1003–1054 (EESF…GSLM), and 1122–1182 (GAQG…ALCI). Positions 905-920 (TMSSSNGKSVTWAQNE) are enriched in polar residues. Arg924 bears the Omega-N-methylarginine mark. Over residues 1007–1017 (PAAARPRSPSP) the composition is skewed to low complexity. A phosphoserine mark is found at Ser1014 and Ser1016. Composition is skewed to polar residues over residues 1039 to 1054 (HSET…GSLM) and 1165 to 1176 (DSGSTTPNSPVS).

The protein belongs to the G-protein coupled receptor 3 family. Interacts with RYR1, RYR2, ITPR1, SHANK1 and SHANK3. The PPXXF motif binds HOMER1, HOMER2 and HOMER3. Interacts with SIAH1 and TAMALIN. Interacts with NCDN. Interacts with NECAB2. Interacts with CAMK2A. As to expression, widely distributed in neuronal cells of the central nervous system.

The protein resides in the cell membrane. In terms of biological role, G-protein coupled receptor for glutamate. Ligand binding causes a conformation change that triggers signaling via guanine nucleotide-binding proteins (G proteins) and modulates the activity of down-stream effectors. Signaling activates a phosphatidylinositol-calcium second messenger system and generates a calcium-activated chloride current. Plays an important role in the regulation of synaptic plasticity and the modulation of the neural network activity. In Rattus norvegicus (Rat), this protein is Metabotropic glutamate receptor 5 (Grm5).